Reading from the N-terminus, the 264-residue chain is Thymidylate synthase (264 aa).

Position 21 (arginine 21) interacts with dUMP. Residue histidine 51 coordinates (6R)-5,10-methylene-5,6,7,8-tetrahydrofolate. 126–127 (RR) contributes to the dUMP binding site. The active-site Nucleophile is the cysteine 146. DUMP-binding positions include 166 to 169 (RSCD), asparagine 177, and 207 to 209 (HLY). Aspartate 169 is a binding site for (6R)-5,10-methylene-5,6,7,8-tetrahydrofolate. Alanine 263 contributes to the (6R)-5,10-methylene-5,6,7,8-tetrahydrofolate binding site.

Belongs to the thymidylate synthase family. Bacterial-type ThyA subfamily. Homodimer.

The protein localises to the cytoplasm. The catalysed reaction is dUMP + (6R)-5,10-methylene-5,6,7,8-tetrahydrofolate = 7,8-dihydrofolate + dTMP. Its pathway is pyrimidine metabolism; dTTP biosynthesis. In terms of biological role, catalyzes the reductive methylation of 2'-deoxyuridine-5'-monophosphate (dUMP) to 2'-deoxythymidine-5'-monophosphate (dTMP) while utilizing 5,10-methylenetetrahydrofolate (mTHF) as the methyl donor and reductant in the reaction, yielding dihydrofolate (DHF) as a by-product. This enzymatic reaction provides an intracellular de novo source of dTMP, an essential precursor for DNA biosynthesis. The chain is Thymidylate synthase from Shewanella baltica (strain OS155 / ATCC BAA-1091).